An 860-amino-acid polypeptide reads, in one-letter code: Leucine--tRNA ligase (860 aa).

A 'HIGH' region motif is present at residues 42–52 (PYPSGRLHMGH). Positions 619–623 (KMSKS) match the 'KMSKS' region motif. Residue Lys622 coordinates ATP.

Belongs to the class-I aminoacyl-tRNA synthetase family.

It localises to the cytoplasm. The enzyme catalyses tRNA(Leu) + L-leucine + ATP = L-leucyl-tRNA(Leu) + AMP + diphosphate. The sequence is that of Leucine--tRNA ligase from Escherichia coli O6:K15:H31 (strain 536 / UPEC).